We begin with the raw amino-acid sequence, 127 residues long: DNA-directed RNA polymerases I, II, and III subunit RPABC2 (127 aa).

The segment covering 1-32 (MSDNEDNFDGDDFDDVEEDEGLDDLENAEEEG) has biased composition (acidic residues). Positions 1 to 52 (MSDNEDNFDGDDFDDVEEDEGLDDLENAEEEGQVNVEILPSGERPQANQKRI) are disordered. Ser2 bears the N-acetylserine mark. The residue at position 2 (Ser2) is a Phosphoserine; by CK2.

Belongs to the archaeal Rpo6/eukaryotic RPB6 RNA polymerase subunit family. Component of the RNA polymerase I (Pol I), RNA polymerase II (Pol II) and RNA polymerase III (Pol III) complexes consisting of at least 13, 12 and 17 subunits, respectively. Pol I complex consists of a ten-subunit catalytic core composed of POLR1A/RPA1, POLR1B/RPA2, POLR1C/RPAC1, POLR1D/RPAC2, POLR1H/RPA12, POLR2E/RPABC1, POLR2F/RPABC2, POLR2H/RPABC3, POLR2K/RPABC4 and POLR2L/RPABC5; a mobile stalk subunit POLR1F/RPA43 protruding from the core and additional subunits homologous to general transcription factors POLR1E/RPA49 and POLR1G/RPA34. Part of Pol I pre-initiation complex (PIC), in which Pol I core assembles with RRN3 and promoter-bound UTBF and SL1/TIF-IB complex. Pol II complex contains a ten-subunit catalytic core composed of POLR2A/RPB1, POLR2B/RPB2, POLR2C/RPB3, POLR2I/RPB9, POLR2J/RPB11, POLR2E/RPABC1, POLR2F/RPABC2, POLR2H/RPABC3, POLR2K/RPABC4 and POLR2L/RPABC5 and a mobile stalk composed of two subunits POLR2D/RPB4 and POLR2G/RPB7. Part of Pol II(G) complex, in which Pol II core associates with an additional subunit POLR2M; unlike conventional Pol II, Pol II(G) functions as a transcriptional repressor. Part of TBP-based Pol II pre-initiation complex (PIC), in which Pol II core assembles with general transcription factors and other specific initiation factors including GTF2E1, GTF2E2, GTF2F1, GTF2F2, TCEA1, ERCC2, ERCC3, GTF2H2, GTF2H3, GTF2H4, GTF2H5, GTF2A1, GTF2A2, GTF2B and TBP; this large multi-subunit PIC complex mediates DNA unwinding and targets Pol II core to the transcription start site where the first phosphodiester bond forms. Pol III complex consists of a ten-subunit catalytic core composed of POLR3A/RPC1, POLR3B/RPC2, POLR1C/RPAC1, POLR1D/RPAC2, POLR3K/RPC10, POLR2E/RPABC1, POLR2F/RPABC2, POLR2H/RPABC3, POLR2K/RPABC4 and POLR2L/RPABC5; a mobile stalk composed of two subunits POLR3H/RPC8 and CRCP/RPC9, protruding from the core and functioning primarily in transcription initiation; and additional subunits homologous to general transcription factors of the RNA polymerase II machinery, POLR3C/RPC3-POLR3F/RPC6-POLR3G/RPC7 heterotrimer required for transcription initiation and POLR3D/RPC4-POLR3E/RPC5 heterodimer involved in both transcription initiation and termination.

It is found in the nucleus. The protein resides in the nucleolus. Functionally, DNA-dependent RNA polymerase catalyzes the transcription of DNA into RNA using the four ribonucleoside triphosphates as substrates. Common component of RNA polymerases I, II, and III which synthesize ribosomal RNA precursors, mRNA precursors and many functional non-coding RNAs, and small RNAs, such as 5S rRNA and tRNAs, respectively. Pol II is the central component of the basal RNA polymerase II transcription machinery. Pols are composed of mobile elements that move relative to each other. In Pol II, POLR2F/RPABC2 is part of the clamp element and together with parts of POLR2A/RPB1 and POLR2B/RPB2 forms a pocket to which the POLR2D/RPB4-POLR2G/RPB7 subcomplex binds. The sequence is that of DNA-directed RNA polymerases I, II, and III subunit RPABC2 (POLR2F) from Bos taurus (Bovine).